The sequence spans 103 residues: Defensin-like protein 268 (103 aa).

A signal peptide spans 1–24 (MARLIFHFVFALILAAYLLSVTDA). 4 cysteine pairs are disulfide-bonded: Cys44-Cys103, Cys68-Cys87, Cys74-Cys98, and Cys78-Cys100.

Belongs to the DEFL family.

The protein resides in the secreted. The protein is Defensin-like protein 268 of Arabidopsis thaliana (Mouse-ear cress).